Consider the following 615-residue polypeptide: Nuclear receptor subfamily 1 group D member 1 (615 aa).

The span at 1–12 shows a compositional bias: polar residues; that stretch reads MTTLDSNNNTGG. A required for phosphorylation by CSNK1E and cytoplasmic localization region spans residues 1 to 70; the sequence is MTTLDSNNNT…TQDPARSFGS (70 aa). Residues 1–120 are disordered; that stretch reads MTTLDSNNNT…SSRVSPSKGT (120 aa). The interval 1–129 is modulating; it reads MTTLDSNNNT…TSNITKLNGM (129 aa). A compositionally biased stretch (low complexity) spans 14–34; it reads ITYIGSSGSSPSRTSPESLYS. Residues 35–48 are compositionally biased toward polar residues; it reads DSSNGSFQSLTQGC. The interval 49–285 is crucial for activation of GJA1; sequence PTYFPPSPTG…PPRSPSPEPT (237 aa). Phosphoserine; by GSK3-beta occurs at positions 55 and 59. Positions 70–94 are enriched in low complexity; it reads SAPPSLSDDSSPSSASSSSSSSSSS. The segment at residues 130–206 is a DNA-binding region (nuclear receptor); the sequence is VLLCKVCGDV…VGMSRDAVRF (77 aa). 2 NR C4-type zinc fingers span residues 133–153 and 170–194; these read CKVC…CEGC and CLKN…FKKC. N6-acetyllysine; by KAT5 occurs at positions 192 and 193. Disordered regions lie at residues 235-286 and 312-337; these read LCPL…EPTM and PGNF…SQGC. The segment covering 240-252 has biased composition (low complexity); it reads TSPTPHPTSGSMG. The span at 253 to 262 shows a compositional bias: pro residues; that stretch reads PSPPPAPAPT. Residue threonine 275 is modified to Phosphothreonine; by CDK1. The NR LBD domain occupies 285 to 615; sequence TMEDVISQVA…KLLSFRVDAQ (331 aa). The segment covering 312 to 328 has biased composition (polar residues); the sequence is PGNFNANHASGSPSATT. Cysteine 419 contributes to the heme binding site. Lysine 592 carries the N6-acetyllysine modification. Histidine 603 is a binding site for heme.

It belongs to the nuclear hormone receptor family. NR1 subfamily. As to quaternary structure, binds DNA as a monomer or a homodimer. Interacts with NR2E3 and ZNHIT1. Interacts with C1D. Interacts with SP1. Interacts with OPHN1 (via C-terminus). Interacts with PER2; the interaction associates PER2 to BMAL1 promoter region. Interacts with CRY1. Interacts with CCAR2. Interacts with SIAH2. Interacts with FBXW7 and CDK1. Interacts with HUWE1. Interacts with NR0B2. Interacts with NFIL3. Interacts (via domain NR LBD) with HSP90AA1 and HSP90AB1. Ubiquitinated, leading to its proteasomal degradation. Ubiquitinated by the SCF(FBXW7) complex when phosphorylated by CDK1 leading to its proteasomal degradation. Ubiquitinated by SIAH2; leading to its proteasomal degradation. Rapidly ubiquitinated in response to inflammatory triggers and sumoylation is a prerequisite to its ubiquitination. Post-translationally, sumoylated by UBE2I, desumoylated by SENP1, and sumoylation is a prerequisite to its ubiquitination. In terms of processing, phosphorylated by CSNK1E; phosphorylation enhances its cytoplasmic localization. Undergoes lysosome-mediated degradation in a time-dependent manner in the liver. In terms of tissue distribution, expressed during adipocyte differentiation (at protein level). Expressed in skeletal muscle, bladder, lumbar spinal cord, pancreatic islets and hypothalamus. Expressed in developing and adult retina. In the adult retina, predominantly expressed in the outer nuclear layer, where rod and cone cells reside, and also localized to the ganglion cell layer. Expressed in a circadian manner in the liver. Expressed in a circadian manner in the lung with a peak between ZT8 and ZT12.

Its subcellular location is the nucleus. The protein resides in the cytoplasm. It localises to the cell projection. It is found in the dendrite. The protein localises to the dendritic spine. Functionally, transcriptional repressor which coordinates circadian rhythm and metabolic pathways in a heme-dependent manner. Integral component of the complex transcription machinery that governs circadian rhythmicity and forms a critical negative limb of the circadian clock by directly repressing the expression of core clock components BMAL1, CLOCK and CRY1. Also regulates genes involved in metabolic functions, including lipid and bile acid metabolism, adipogenesis, gluconeogenesis and the macrophage inflammatory response. Acts as a receptor for heme which stimulates its interaction with the NCOR1/HDAC3 corepressor complex, enhancing transcriptional repression. Recognizes two classes of DNA response elements within the promoter of its target genes and can bind to DNA as either monomers or homodimers, depending on the nature of the response element. Binds as a monomer to a response element composed of the consensus half-site motif 5'-[A/G]GGTCA-3' preceded by an A/T-rich 5' sequence (RevRE), or as a homodimer to a direct repeat of the core motif spaced by two nucleotides (RevDR-2). Acts as a potent competitive repressor of ROR alpha (RORA) function and regulates the levels of its ligand heme by repressing the expression of PPARGC1A, a potent inducer of heme synthesis. Regulates lipid metabolism by repressing the expression of APOC3 and by influencing the activity of sterol response element binding proteins (SREBPs); represses INSIG2 which interferes with the proteolytic activation of SREBPs which in turn govern the rhythmic expression of enzymes with key functions in sterol and fatty acid synthesis. Regulates gluconeogenesis via repression of G6PC1 and PEPCK and adipocyte differentiation via repression of PPARG. Regulates glucagon release in pancreatic alpha-cells via the AMPK-NAMPT-SIRT1 pathway and the proliferation, glucose-induced insulin secretion and expression of key lipogenic genes in pancreatic-beta cells. Positively regulates bile acid synthesis by increasing hepatic expression of CYP7A1 via repression of NR0B2 and NFIL3 which are negative regulators of CYP7A1. Modulates skeletal muscle oxidative capacity by regulating mitochondrial biogenesis and autophagy; controls mitochondrial biogenesis and respiration by interfering with the STK11-PRKAA1/2-SIRT1-PPARGC1A signaling pathway. Represses the expression of SERPINE1/PAI1, an important modulator of cardiovascular disease and the expression of inflammatory cytokines and chemokines in macrophages. Represses gene expression at a distance in macrophages by inhibiting the transcription of enhancer-derived RNAs (eRNAs). Plays a role in the circadian regulation of body temperature and negatively regulates thermogenic transcriptional programs in brown adipose tissue (BAT); imposes a circadian oscillation in BAT activity, increasing body temperature when awake and depressing thermogenesis during sleep. In concert with NR2E3, regulates transcriptional networks critical for photoreceptor development and function. In addition to its activity as a repressor, can also act as a transcriptional activator. In the ovarian granulosa cells acts as a transcriptional activator of STAR which plays a role in steroid biosynthesis. In collaboration with SP1, activates GJA1 transcription in a heme-independent manner. Represses the transcription of CYP2B10, CYP4A10 and CYP4A14. Represses the transcription of CES2. Represses and regulates the circadian expression of TSHB in a NCOR1-dependent manner. Negatively regulates the protein stability of NR3C1 and influences the time-dependent subcellular distribution of NR3C1, thereby affecting its transcriptional regulatory activity. Plays a critical role in the circadian control of neutrophilic inflammation in the lung; under resting, non-stress conditions, acts as a rhythmic repressor to limit inflammatory activity whereas in the presence of inflammatory triggers undergoes ubiquitin-mediated degradation thereby relieving inhibition of the inflammatory response. Plays a key role in the circadian regulation of microglial activation and neuroinflammation; suppresses microglial activation through the NF-kappaB pathway in the central nervous system. Plays a role in the regulation of the diurnal rhythms of lipid and protein metabolism in the skeletal muscle via transcriptional repression of genes controlling lipid and amino acid metabolism in the muscle. This is Nuclear receptor subfamily 1 group D member 1 (Nr1d1) from Mus musculus (Mouse).